We begin with the raw amino-acid sequence, 131 residues long: Ribosome-binding factor A (131 aa).

Belongs to the RbfA family. In terms of assembly, monomer. Binds 30S ribosomal subunits, but not 50S ribosomal subunits or 70S ribosomes.

The protein localises to the cytoplasm. Functionally, one of several proteins that assist in the late maturation steps of the functional core of the 30S ribosomal subunit. Associates with free 30S ribosomal subunits (but not with 30S subunits that are part of 70S ribosomes or polysomes). Required for efficient processing of 16S rRNA. May interact with the 5'-terminal helix region of 16S rRNA. This Thermotoga sp. (strain RQ2) protein is Ribosome-binding factor A.